Consider the following 472-residue polypeptide: Adenosylhomocysteinase (472 aa).

Residues Thr64, Asp138, and Glu198 each contribute to the substrate site. 199–201 (TTT) contributes to the NAD(+) binding site. Substrate is bound by residues Lys228 and Asp232. NAD(+)-binding positions include Asn233, 262–267 (GFGDVG), Glu285, Asn320, 341–343 (IGH), and Asn386.

Belongs to the adenosylhomocysteinase family. It depends on NAD(+) as a cofactor.

It localises to the cytoplasm. The enzyme catalyses S-adenosyl-L-homocysteine + H2O = L-homocysteine + adenosine. It participates in amino-acid biosynthesis; L-homocysteine biosynthesis; L-homocysteine from S-adenosyl-L-homocysteine: step 1/1. Its function is as follows. May play a key role in the regulation of the intracellular concentration of adenosylhomocysteine. In Prochlorococcus marinus subsp. pastoris (strain CCMP1986 / NIES-2087 / MED4), this protein is Adenosylhomocysteinase.